Consider the following 60-residue polypeptide: Small ribosomal subunit protein bS21 (60 aa).

The tract at residues 38–60 is disordered; the sequence is KGVKRREKEKAARKRLQKKHRMY.

This sequence belongs to the bacterial ribosomal protein bS21 family.

This Mycoplasmoides gallisepticum (strain R(low / passage 15 / clone 2)) (Mycoplasma gallisepticum) protein is Small ribosomal subunit protein bS21.